A 158-amino-acid polypeptide reads, in one-letter code: RNA pyrophosphohydrolase (158 aa).

Residues 8–152 form the Nudix hydrolase domain; that stretch reads PYRPCAGVML…KRALYRGLIE (145 aa). The short motif at 42–63 is the Nudix box element; that stretch reads GGIDEGEDAEKAAIRELGEETG.

The protein belongs to the Nudix hydrolase family. RppH subfamily. The cofactor is a divalent metal cation.

Accelerates the degradation of transcripts by removing pyrophosphate from the 5'-end of triphosphorylated RNA, leading to a more labile monophosphorylated state that can stimulate subsequent ribonuclease cleavage. This Sphingopyxis alaskensis (strain DSM 13593 / LMG 18877 / RB2256) (Sphingomonas alaskensis) protein is RNA pyrophosphohydrolase.